A 413-amino-acid chain; its full sequence is Multidrug resistance protein MdtA (413 aa).

Residues 1–20 (MKGSNTFRWAIAIGVVVAAA) form the signal peptide. Disordered stretches follow at residues 31 to 57 (SPTA…RDGP) and 391 to 413 (EPQT…GARA). Over residues 397–413 (ADEKSPSRHEGQKGARA) the composition is skewed to basic and acidic residues.

It belongs to the membrane fusion protein (MFP) (TC 8.A.1) family. In terms of assembly, part of a tripartite efflux system composed of MdtA, MdtB and MdtC.

The protein localises to the cell inner membrane. The polypeptide is Multidrug resistance protein MdtA (Salmonella typhimurium (strain LT2 / SGSC1412 / ATCC 700720)).